The sequence spans 91 residues: MTEQIDRYVSFRNVEWERRTAEVFALLQPHFDGSTSPFWDYFLRQRVIAHAQGLDDLRVLHNFLPTLKDLLEELDDERTLSRLEELEVLCM.

This sequence belongs to the CowN family.

Is required to sustain N(2)-dependent growth in the presence of low levels of carbon monoxide (CO). Probably acts by protecting the N(2) fixation ability of the nitrogenase complex, which is inactivated in the presence of CO. The chain is N(2)-fixation sustaining protein CowN from Gluconacetobacter diazotrophicus (strain ATCC 49037 / DSM 5601 / CCUG 37298 / CIP 103539 / LMG 7603 / PAl5).